Consider the following 492-residue polypeptide: Protein nucleotidyltransferase YdiU (492 aa).

Residues Gly-101, Gly-103, Arg-104, Lys-124, Asp-136, Gly-137, Arg-187, and Arg-194 each coordinate ATP. Asp-268 acts as the Proton acceptor in catalysis. Positions 269 and 278 each coordinate Mg(2+). Asp-278 contacts ATP.

Belongs to the SELO family. Requires Mg(2+) as cofactor. Mn(2+) is required as a cofactor.

It catalyses the reaction L-seryl-[protein] + ATP = 3-O-(5'-adenylyl)-L-seryl-[protein] + diphosphate. The catalysed reaction is L-threonyl-[protein] + ATP = 3-O-(5'-adenylyl)-L-threonyl-[protein] + diphosphate. It carries out the reaction L-tyrosyl-[protein] + ATP = O-(5'-adenylyl)-L-tyrosyl-[protein] + diphosphate. The enzyme catalyses L-histidyl-[protein] + UTP = N(tele)-(5'-uridylyl)-L-histidyl-[protein] + diphosphate. It catalyses the reaction L-seryl-[protein] + UTP = O-(5'-uridylyl)-L-seryl-[protein] + diphosphate. The catalysed reaction is L-tyrosyl-[protein] + UTP = O-(5'-uridylyl)-L-tyrosyl-[protein] + diphosphate. Functionally, nucleotidyltransferase involved in the post-translational modification of proteins. It can catalyze the addition of adenosine monophosphate (AMP) or uridine monophosphate (UMP) to a protein, resulting in modifications known as AMPylation and UMPylation. This chain is Protein nucleotidyltransferase YdiU, found in Corynebacterium efficiens (strain DSM 44549 / YS-314 / AJ 12310 / JCM 11189 / NBRC 100395).